A 114-amino-acid chain; its full sequence is UPF0145 protein Acry_1752 (114 aa).

Belongs to the UPF0145 family.

The protein is UPF0145 protein Acry_1752 of Acidiphilium cryptum (strain JF-5).